The chain runs to 766 residues: 5-methyltetrahydropteroyltriglutamate--homocysteine methyltransferase 1 (766 aa).

Lys-18 and Asn-116 together coordinate 5-methyltetrahydropteroyltri-L-glutamate. Residues 438–440 (IGS) and Glu-491 contribute to the L-homocysteine site. Residues 438-440 (IGS) and Glu-491 contribute to the L-methionine site. 5-methyltetrahydropteroyltri-L-glutamate is bound by residues Asp-496, Tyr-519, 522 to 523 (RC), and Trp-568. An L-homocysteine-binding site is contributed by Asp-606. Asp-606 lines the L-methionine pocket. 4 residues coordinate Zn(2+): His-648, Cys-650, His-659, and Glu-672. The active-site Proton donor is the His-702. A Zn(2+)-binding site is contributed by Cys-734.

Belongs to the vitamin-B12 independent methionine synthase family. Requires Zn(2+) as cofactor.

The protein localises to the cytoplasm. Its subcellular location is the cytosol. The catalysed reaction is 5-methyltetrahydropteroyltri-L-glutamate + L-homocysteine = tetrahydropteroyltri-L-glutamate + L-methionine. It participates in amino-acid biosynthesis; L-methionine biosynthesis via de novo pathway; L-methionine from L-homocysteine (MetE route): step 1/1. Catalyzes the transfer of a methyl group from 5-methyltetrahydrofolate to homocysteine resulting in methionine formation. This is 5-methyltetrahydropteroyltriglutamate--homocysteine methyltransferase 1 from Oryza sativa subsp. japonica (Rice).